The chain runs to 183 residues: Dual-action ribosomal maturation protein DarP (183 aa).

Belongs to the DarP family.

The protein localises to the cytoplasm. Its function is as follows. Member of a network of 50S ribosomal subunit biogenesis factors which assembles along the 30S-50S interface, preventing incorrect 23S rRNA structures from forming. Promotes peptidyl transferase center (PTC) maturation. The protein is Dual-action ribosomal maturation protein DarP of Escherichia coli O81 (strain ED1a).